A 121-amino-acid polypeptide reads, in one-letter code: Large ribosomal subunit protein bL12 (121 aa).

The protein belongs to the bacterial ribosomal protein bL12 family. In terms of assembly, homodimer. Part of the ribosomal stalk of the 50S ribosomal subunit. Forms a multimeric L10(L12)X complex, where L10 forms an elongated spine to which 2 to 4 L12 dimers bind in a sequential fashion. Binds GTP-bound translation factors.

Forms part of the ribosomal stalk which helps the ribosome interact with GTP-bound translation factors. Is thus essential for accurate translation. This is Large ribosomal subunit protein bL12 from Streptococcus pyogenes serotype M3 (strain ATCC BAA-595 / MGAS315).